Reading from the N-terminus, the 129-residue chain is Small ribosomal subunit protein uS11 (129 aa).

Belongs to the universal ribosomal protein uS11 family. In terms of assembly, part of the 30S ribosomal subunit. Interacts with proteins S7 and S18. Binds to IF-3.

Its function is as follows. Located on the platform of the 30S subunit, it bridges several disparate RNA helices of the 16S rRNA. Forms part of the Shine-Dalgarno cleft in the 70S ribosome. The protein is Small ribosomal subunit protein uS11 of Bartonella bacilliformis (strain ATCC 35685 / KC583 / Herrer 020/F12,63).